The primary structure comprises 371 residues: Cytochrome b (371 aa).

The next 4 helical transmembrane spans lie at 25 to 45, 69 to 90, 105 to 125, and 170 to 190; these read FGSM…FLAV, WMMQ…YIHI, WMSG…GYVL, and FFAL…LHII. Positions 75 and 89 each coordinate heme b. Heme b-binding residues include histidine 174 and histidine 188. Histidine 193 provides a ligand contact to a ubiquinone. 4 helical membrane-spanning segments follow: residues 218–238, 280–300, 312–332, and 339–358; these read YKDL…VSFF, LGGA…PFTH, LSQL…WAAT, and YIII…ISMP.

The protein belongs to the cytochrome b family. In terms of assembly, the cytochrome bc1 complex contains 3 respiratory subunits (MT-CYB, CYC1 and UQCRFS1), 2 core proteins (UQCRC1 and UQCRC2) and probably 6 low-molecular weight proteins. Heme b serves as cofactor.

It is found in the mitochondrion inner membrane. In terms of biological role, component of the ubiquinol-cytochrome c reductase complex (complex III or cytochrome b-c1 complex) that is part of the mitochondrial respiratory chain. The b-c1 complex mediates electron transfer from ubiquinol to cytochrome c. Contributes to the generation of a proton gradient across the mitochondrial membrane that is then used for ATP synthesis. The sequence is that of Cytochrome b (MT-CYB) from Python molurus (Indian python).